We begin with the raw amino-acid sequence, 392 residues long: Putative pectate lyase 21 (392 aa).

An N-terminal signal peptide occupies residues 1–21 (MSIVCTFFLFLLNTSFAFAFA). The N-linked (GlcNAc...) asparagine glycan is linked to Asn38. Asp189, Asp213, and Asp217 together coordinate Ca(2+). An N-linked (GlcNAc...) asparagine glycan is attached at Asn220. Arg269 is a catalytic residue.

The protein belongs to the polysaccharide lyase 1 family. The cofactor is Ca(2+).

The enzyme catalyses Eliminative cleavage of (1-&gt;4)-alpha-D-galacturonan to give oligosaccharides with 4-deoxy-alpha-D-galact-4-enuronosyl groups at their non-reducing ends.. It participates in glycan metabolism; pectin degradation; 2-dehydro-3-deoxy-D-gluconate from pectin: step 2/5. This chain is Putative pectate lyase 21, found in Arabidopsis thaliana (Mouse-ear cress).